We begin with the raw amino-acid sequence, 473 residues long: uncharacterized protein (473 aa).

The segment at methionine 1–aspartate 86 is disordered. Residues isoleucine 10–isoleucine 19 show a composition bias toward basic and acidic residues. 2 stretches are compositionally biased toward polar residues: residues aspartate 20–asparagine 39 and glutamate 55–alanine 68. At serine 64 the chain carries Phosphoserine. Residues serine 69–serine 83 show a composition bias toward low complexity. RRM domains lie at leucine 95–phenylalanine 165, isoleucine 188–valine 260, and valine 305–leucine 370. The disordered stretch occupies residues methionine 448–glutamate 473. A compositionally biased stretch (polar residues) spans asparagine 453 to lysine 467.

This is an uncharacterized protein from Schizosaccharomyces pombe (strain 972 / ATCC 24843) (Fission yeast).